The chain runs to 122 residues: Small ribosomal subunit protein uS13 (122 aa).

The interval 93 to 122 is disordered; sequence RRGLPVRGQKTKTNARTRKGPKKTMANKKK.

The protein belongs to the universal ribosomal protein uS13 family. Part of the 30S ribosomal subunit. Forms a loose heterodimer with protein S19. Forms two bridges to the 50S subunit in the 70S ribosome.

Located at the top of the head of the 30S subunit, it contacts several helices of the 16S rRNA. In the 70S ribosome it contacts the 23S rRNA (bridge B1a) and protein L5 of the 50S subunit (bridge B1b), connecting the 2 subunits; these bridges are implicated in subunit movement. Contacts the tRNAs in the A and P-sites. The protein is Small ribosomal subunit protein uS13 of Clostridium botulinum (strain Alaska E43 / Type E3).